The following is a 167-amino-acid chain: Homeobox protein EgHBX3 (167 aa).

A DNA-binding region (homeobox) is located at residues 80–139 (SQSKRRVLFNKFQISQLEKRLKQRYLTAQERQELAHTIGLTPTQVKIWFQNHAYKMKRLF).

Belongs to the NK-2 homeobox family.

It localises to the nucleus. The chain is Homeobox protein EgHBX3 (HBX3) from Echinococcus granulosus (Hydatid tapeworm).